The following is a 145-amino-acid chain: MEKLVESLSSNQKRNQALLHPFEGNEALLELTKGRLGNEEPCHVKGAQGEEYVILPKHLLLGLVNLLQKGREERVKLNLERDILQQMPIDFEDVWEVALQEIHRENANPSYVDTKRLIKEIKRRHPNLFFQLGDLFGRAKEEMLD.

It belongs to the UPF0763 family.

This Wolinella succinogenes (strain ATCC 29543 / DSM 1740 / CCUG 13145 / JCM 31913 / LMG 7466 / NCTC 11488 / FDC 602W) (Vibrio succinogenes) protein is UPF0763 protein WS1752.